The chain runs to 729 residues: Glycerophosphodiester phosphodiesterase GDPDL5 (729 aa).

Positions 1 to 22 (MACPRVIFLILITFFILQTAFS) are cleaved as a signal peptide. GP-PDE domains are found at residues 33-320 (PAVI…YRAI) and 337-645 (ITII…ARYR). N-linked (GlcNAc...) asparagine glycans are attached at residues Asn-88, Asn-162, Asn-218, Asn-227, Asn-285, Asn-302, Asn-390, Asn-401, and Asn-507. The helical transmembrane segment at 709 to 729 (AIEVPFAFIAMAILVCFFISV) threads the bilayer.

Belongs to the glycerophosphoryl diester phosphodiesterase family. Expressed in stems, flowers and siliques.

The protein resides in the membrane. It carries out the reaction a sn-glycero-3-phosphodiester + H2O = an alcohol + sn-glycerol 3-phosphate + H(+). The polypeptide is Glycerophosphodiester phosphodiesterase GDPDL5 (Arabidopsis thaliana (Mouse-ear cress)).